The primary structure comprises 309 residues: Hydroxyacylglutathione hydrolase, mitochondrial (309 aa).

The N-terminal 24 residues, 1–24, are a transit peptide targeting the mitochondrion; that stretch reads MVLGRGSLCLRSLSALGATCARRG. Residue lysine 90 is modified to N6-acetyllysine. Residues histidine 103, histidine 105, aspartate 107, and histidine 108 each coordinate Zn(2+). Position 117 is an N6-acetyllysine (lysine 117). Residues histidine 159 and aspartate 183 each coordinate Zn(2+). Residues 192–194 and 222–224 contribute to the substrate site; these read KFY and HEY. Histidine 222 lines the Zn(2+) pocket. An N6-acetyllysine; alternate modification is found at lysine 230. Position 230 is an N6-succinyllysine; alternate (lysine 230). A substrate-binding site is contributed by 298–301; the sequence is RREK.

It belongs to the metallo-beta-lactamase superfamily. Glyoxalase II family. In terms of assembly, monomer. The cofactor is Zn(2+).

It is found in the mitochondrion matrix. It localises to the cytoplasm. The catalysed reaction is an S-(2-hydroxyacyl)glutathione + H2O = a 2-hydroxy carboxylate + glutathione + H(+). The enzyme catalyses (R)-S-lactoylglutathione + H2O = (R)-lactate + glutathione + H(+). Its pathway is secondary metabolite metabolism; methylglyoxal degradation; (R)-lactate from methylglyoxal: step 2/2. Its function is as follows. Thiolesterase that catalyzes the hydrolysis of S-D-lactoyl-glutathione to form glutathione and D-lactic acid. This chain is Hydroxyacylglutathione hydrolase, mitochondrial (Hagh), found in Mus musculus (Mouse).